The chain runs to 610 residues: UvrABC system protein C (610 aa).

Residues 16-94 (SQPGVYRMYD…IKLYQPRYNV (79 aa)) enclose the GIY-YIG domain. A UVR domain is found at 204-239 (DQVLTQLIARMEKASQDLAFEEAARIRDQIQAVRRV).

This sequence belongs to the UvrC family. Interacts with UvrB in an incision complex.

The protein resides in the cytoplasm. Functionally, the UvrABC repair system catalyzes the recognition and processing of DNA lesions. UvrC both incises the 5' and 3' sides of the lesion. The N-terminal half is responsible for the 3' incision and the C-terminal half is responsible for the 5' incision. The sequence is that of UvrABC system protein C from Salmonella paratyphi C (strain RKS4594).